Reading from the N-terminus, the 251-residue chain is Triosephosphate isomerase (251 aa).

9 to 11 (NWK) contacts substrate. His-96 serves as the catalytic Electrophile. Glu-168 serves as the catalytic Proton acceptor. Substrate is bound by residues Gly-174, Ser-214, and 235–236 (GG).

This sequence belongs to the triosephosphate isomerase family. Homodimer.

Its subcellular location is the cytoplasm. It carries out the reaction D-glyceraldehyde 3-phosphate = dihydroxyacetone phosphate. It participates in carbohydrate biosynthesis; gluconeogenesis. It functions in the pathway carbohydrate degradation; glycolysis; D-glyceraldehyde 3-phosphate from glycerone phosphate: step 1/1. Functionally, involved in the gluconeogenesis. Catalyzes stereospecifically the conversion of dihydroxyacetone phosphate (DHAP) to D-glyceraldehyde-3-phosphate (G3P). This is Triosephosphate isomerase from Porphyromonas gingivalis (strain ATCC BAA-308 / W83).